The sequence spans 931 residues: Isoleucine--tRNA ligase (931 aa).

Positions 57 to 67 (PFANGNIHMGH) match the 'HIGH' region motif. Glu-556 is a binding site for L-isoleucyl-5'-AMP. The 'KMSKS' region motif lies at 597–601 (KMSKS). Lys-600 is an ATP binding site. Cys-890, Cys-893, Cys-910, and Cys-913 together coordinate Zn(2+).

It belongs to the class-I aminoacyl-tRNA synthetase family. IleS type 1 subfamily. In terms of assembly, monomer. Zn(2+) is required as a cofactor.

The protein localises to the cytoplasm. The enzyme catalyses tRNA(Ile) + L-isoleucine + ATP = L-isoleucyl-tRNA(Ile) + AMP + diphosphate. In terms of biological role, catalyzes the attachment of isoleucine to tRNA(Ile). As IleRS can inadvertently accommodate and process structurally similar amino acids such as valine, to avoid such errors it has two additional distinct tRNA(Ile)-dependent editing activities. One activity is designated as 'pretransfer' editing and involves the hydrolysis of activated Val-AMP. The other activity is designated 'posttransfer' editing and involves deacylation of mischarged Val-tRNA(Ile). The chain is Isoleucine--tRNA ligase from Lactobacillus delbrueckii subsp. bulgaricus (strain ATCC BAA-365 / Lb-18).